A 276-amino-acid polypeptide reads, in one-letter code: Membrane protein insertase YidC 2 (276 aa).

A signal peptide spans 1-22; it reads MGVKKKLKLTSLLGLSLLIMTA. C23 carries the N-palmitoyl cysteine lipid modification. C23 carries the S-diacylglycerol cysteine lipid modification. Transmembrane regions (helical) follow at residues 58–78, 130–150, 169–189, and 207–227; these read ISIG…LLPV, SDSL…FQAL, VDTT…STWL, and GIPV…ALYW.

Belongs to the OXA1/ALB3/YidC family. Type 2 subfamily. In terms of assembly, interacts with KhpB (also called EloR/Jag).

It localises to the cell membrane. Required for the insertion and/or proper folding and/or complex formation of integral membrane proteins into the membrane. Involved in integration of membrane proteins that insert both dependently and independently of the Sec translocase complex, as well as at least some lipoproteins. The protein is Membrane protein insertase YidC 2 of Streptococcus pneumoniae (strain ATCC BAA-255 / R6).